The chain runs to 537 residues: Leucine-rich repeat LGI family member 4 (537 aa).

Positions 1 to 19 are cleaved as a signal peptide; that stretch reads MGGAGILLLLLAGAGVVVA. LRR repeat units follow at residues 53 to 74, 77 to 98, 101 to 122, and 125 to 146; these read TLLSLSLVRTGVTQLKAGSFLR, SLHLLLFTSNSFSVIEDDAFAG, HLQYLFIEDNEIGSISKNALRG, and SLTHLSLANNHLETLPRFLFRG. The region spanning 158-208 is the LRRCT domain; that stretch reads NPFQCDCRVLWLLQWMPTVNASVGTGACAGPASLSHMQLHHLDPKTFKCRA. Asn-177 is a glycosylation site (N-linked (GlcNAc...) asparagine). 7 EAR repeats span residues 210–252, 256–298, 302–349, 351–394, 396–439, 441–483, and 487–532; these read ELSW…SWDY, RFRP…ARPS, RLAP…CRDG, GFYP…HWTG, RFER…RWDG, MFRL…RLEP, and LLEP…QHHE.

As to quaternary structure, can bind to ADAM11, ADAM22 and ADAM23. In terms of tissue distribution, widely expressed, with highest expression in brain.

It localises to the secreted. Functionally, component of Schwann cell signaling pathway(s) that controls axon segregation and myelin formation. This is Leucine-rich repeat LGI family member 4 (LGI4) from Homo sapiens (Human).